Consider the following 395-residue polypeptide: Bifunctional enzyme IspD/IspF (395 aa).

A 2-C-methyl-D-erythritol 4-phosphate cytidylyltransferase region spans residues 1 to 237 (MRTWVLLLAA…DANEPQVTVP (237 aa)). A 2-C-methyl-D-erythritol 2,4-cyclodiphosphate synthase region spans residues 238–395 (CVGWGYDVHR…AAVTGLRPMP (158 aa)). A divalent metal cation-binding residues include D244 and H246. 4-CDP-2-C-methyl-D-erythritol 2-phosphate-binding positions include 244 to 246 (DVH) and 270 to 271 (HS). H278 is an a divalent metal cation binding site. 4-CDP-2-C-methyl-D-erythritol 2-phosphate is bound by residues 292–294 (DIG), 297–301 (FPDSD), 368–371 (TTEE), and F375.

In the N-terminal section; belongs to the IspD/TarI cytidylyltransferase family. IspD subfamily. This sequence in the C-terminal section; belongs to the IspF family. The cofactor is a divalent metal cation.

It carries out the reaction 2-C-methyl-D-erythritol 4-phosphate + CTP + H(+) = 4-CDP-2-C-methyl-D-erythritol + diphosphate. The catalysed reaction is 4-CDP-2-C-methyl-D-erythritol 2-phosphate = 2-C-methyl-D-erythritol 2,4-cyclic diphosphate + CMP. The protein operates within isoprenoid biosynthesis; isopentenyl diphosphate biosynthesis via DXP pathway; isopentenyl diphosphate from 1-deoxy-D-xylulose 5-phosphate: step 2/6. Its pathway is isoprenoid biosynthesis; isopentenyl diphosphate biosynthesis via DXP pathway; isopentenyl diphosphate from 1-deoxy-D-xylulose 5-phosphate: step 4/6. Functionally, bifunctional enzyme that catalyzes the formation of 4-diphosphocytidyl-2-C-methyl-D-erythritol from CTP and 2-C-methyl-D-erythritol 4-phosphate (MEP) (IspD), and catalyzes the conversion of 4-diphosphocytidyl-2-C-methyl-D-erythritol 2-phosphate (CDP-ME2P) to 2-C-methyl-D-erythritol 2,4-cyclodiphosphate (ME-CPP) with a corresponding release of cytidine 5-monophosphate (CMP) (IspF). The polypeptide is Bifunctional enzyme IspD/IspF (Nitratidesulfovibrio vulgaris (strain ATCC 29579 / DSM 644 / CCUG 34227 / NCIMB 8303 / VKM B-1760 / Hildenborough) (Desulfovibrio vulgaris)).